Consider the following 511-residue polypeptide: Frizzled/smoothened-like sans CRD protein C (511 aa).

The N-terminal stretch at 1–25 (MNQINKFIKNLYLIIITIILIIVIS) is a signal peptide. Topologically, residues 26 to 93 (NDNNGLFING…QWESYFEMSL (68 aa)) are extracellular. A glycan (N-linked (GlcNAc...) asparagine) is linked at asparagine 51. Residues 94-114 (IMGSISMFASLFLIITYSPLI) form a helical membrane-spanning segment. Over 115–122 (NKKHTRHT) the chain is Cytoplasmic. A helical transmembrane segment spans residues 123-143 (VGILCMSIGIFFVMVSDGRQL). Residues 144-172 (WDIESPGEYKKYCPDTGRYARQSDTKCLT) are Extracellular-facing. A helical transmembrane segment spans residues 173-193 (TGLFFQFGCVTAIGWWSILAV). Over 194-209 (DLWMTIAKKVQTTKKQ) the chain is Cytoplasmic. A helical membrane pass occupies residues 210–230 (LLYYLIGINTVSLILTFGPVV). Residues 231–253 (KNQYGFGNAAIGCWMLDLKYQYG) are Extracellular-facing. A helical transmembrane segment spans residues 254-274 (FFWIPVGICLSVGSVFIGLIF). Residues 275-295 (WEIYKISDAVKKRYLKKHIKP) are Cytoplasmic-facing. Residues 296–316 (LCLIVLMCLEFLYMFIYYSYI) form a helical membrane-spanning segment. The Extracellular segment spans residues 317–357 (TANQPTYNKHVAEYIMCLIINAANVPGSYTCQLKTVSPTAQ). A helical membrane pass occupies residues 358–378 (FLFLIAIRLMGLQGLIFYGLT). The Cytoplasmic segment spans residues 379-511 (AATKKVWANS…RVNSPDNLQP (133 aa)). The interval 430–511 (NGYTTGGSDN…RVNSPDNLQP (82 aa)) is disordered. Residues 433–443 (TTGGSDNGVGS) show a composition bias toward gly residues. The span at 451-460 (KSSSNGGAQD) shows a compositional bias: polar residues. The span at 461 to 485 (NNNNNNNNNNNNNNNNNNNNNNNNN) shows a compositional bias: low complexity. The span at 486–511 (SSSLEISGVESNNSTPRVNSPDNLQP) shows a compositional bias: polar residues.

Belongs to the G-protein coupled receptor Fz/Smo family.

Its subcellular location is the membrane. The protein is Frizzled/smoothened-like sans CRD protein C (fscC) of Dictyostelium discoideum (Social amoeba).